The following is a 138-amino-acid chain: ATP synthase epsilon chain (138 aa).

The protein belongs to the ATPase epsilon chain family. As to quaternary structure, F-type ATPases have 2 components, CF(1) - the catalytic core - and CF(0) - the membrane proton channel. CF(1) has five subunits: alpha(3), beta(3), gamma(1), delta(1), epsilon(1). CF(0) has three main subunits: a, b and c.

The protein resides in the cell inner membrane. Its function is as follows. Produces ATP from ADP in the presence of a proton gradient across the membrane. The chain is ATP synthase epsilon chain from Delftia acidovorans (strain DSM 14801 / SPH-1).